A 338-amino-acid chain; its full sequence is MTRISLTRYLVEEQRKHNTIQPELRLLIEVVARACKAISNAVSKGALAGVLGSAGTGNVQGETQQKLDVIANEVLLDANEWGGHLAAMASEEMESFYEIPNRYPKGEYLLMFDPLDGSSNIDVNVSIGTIFSVLHMPKPGQTVTEADFMQPGTHQVAAGYAVYGPQTTLVLTVGNGVHMFTLDREAGSFVLTHSNVTIPDDTKEFAINMSNMRHWAPPVRRYIDECLAGEEGPRGKNFNMRWVASMVADVHRILTRGGVFMYPWDKREPEKPGKLRLMYEANPMAMLVEQAGGAATNGHQRIMDVQPEKLHQRVSVILGSKNEVERVTRYHLEAEDKA.

4 residues coordinate Mg(2+): glutamate 91, aspartate 113, leucine 115, and aspartate 116. Substrate is bound by residues 116 to 119 (DGSS), asparagine 208, and lysine 274. Glutamate 280 serves as a coordination point for Mg(2+).

It belongs to the FBPase class 1 family. In terms of assembly, homotetramer. Mg(2+) is required as a cofactor.

It is found in the cytoplasm. It catalyses the reaction beta-D-fructose 1,6-bisphosphate + H2O = beta-D-fructose 6-phosphate + phosphate. It functions in the pathway carbohydrate biosynthesis; gluconeogenesis. The polypeptide is Fructose-1,6-bisphosphatase class 1 1 (Cupriavidus necator (strain ATCC 17699 / DSM 428 / KCTC 22496 / NCIMB 10442 / H16 / Stanier 337) (Ralstonia eutropha)).